Here is a 332-residue protein sequence, read N- to C-terminus: L-lactate dehydrogenase A chain (332 aa).

At alanine 2 the chain carries N-acetylalanine. The residue at position 5 (lysine 5) is an N6-acetyllysine; alternate. The residue at position 5 (lysine 5) is an N6-succinyllysine; alternate. Position 14 is an N6-acetyllysine (lysine 14). Position 18 is a phosphothreonine (threonine 18). Residue 29–57 coordinates NAD(+); the sequence is GAVGMACAISILMKDLADELALVDVIEDK. Lysine 57 is subject to N6-acetyllysine; alternate. Lysine 57 participates in a covalent cross-link: Glycyl lysine isopeptide (Lys-Gly) (interchain with G-Cter in SUMO2); alternate. Residue lysine 81 is modified to N6-acetyllysine. NAD(+) is bound at residue arginine 99. Arginine 106 is a substrate binding site. Residue lysine 118 is modified to N6-acetyllysine; alternate. Lysine 118 carries the post-translational modification N6-succinyllysine; alternate. Position 126 is an N6-acetyllysine (lysine 126). Asparagine 138 provides a ligand contact to NAD(+). Substrate is bound by residues asparagine 138 and arginine 169. Histidine 193 serves as the catalytic Proton acceptor. 2 positions are modified to N6-acetyllysine: lysine 224 and lysine 232. Residue tyrosine 239 is modified to Phosphotyrosine. Lysine 243 carries the N6-acetyllysine modification. Residue threonine 248 coordinates substrate. Position 309 is a phosphothreonine (threonine 309). At lysine 318 the chain carries N6-acetyllysine; alternate. Lysine 318 bears the N6-succinyllysine; alternate mark. Position 322 is a phosphothreonine (threonine 322).

This sequence belongs to the LDH/MDH superfamily. LDH family. Homotetramer. Interacts with PTEN upstream reading frame protein MP31. In terms of processing, ISGylated.

The protein resides in the cytoplasm. The catalysed reaction is (S)-lactate + NAD(+) = pyruvate + NADH + H(+). It participates in fermentation; pyruvate fermentation to lactate; (S)-lactate from pyruvate: step 1/1. Functionally, interconverts simultaneously and stereospecifically pyruvate and lactate with concomitant interconversion of NADH and NAD(+). The protein is L-lactate dehydrogenase A chain (LDHA) of Macaca fascicularis (Crab-eating macaque).